The following is a 362-amino-acid chain: Alternative oxidase, mitochondrial (362 aa).

Residues 1–64 (MNTPKVNILY…RGFTTTSVVR (64 aa)) constitute a mitochondrion transit peptide. Residues 156–176 (LVRFIFLESIAGVPGMVAGML) form a helical membrane-spanning segment. Fe cation is bound by residues Glu-163, Glu-202, and His-205. The helical transmembrane segment at 222–242 (LILGAQGVFFNAMFLSYLVSP) threads the bilayer. Fe cation-binding residues include Glu-253, Glu-310, and His-313.

It belongs to the alternative oxidase family. Fe cation serves as cofactor.

The protein resides in the mitochondrion inner membrane. Catalyzes cyanide-resistant oxygen consumption. May increase respiration when the cytochrome respiratory pathway is restricted, or in response to low temperatures. The polypeptide is Alternative oxidase, mitochondrial (aod-1) (Gelasinospora sp. (strain S23)).